The sequence spans 478 residues: Catalase easC (478 aa).

His-54 is an active-site residue. Tyr-343 serves as a coordination point for heme. The interval Val-459–Leu-478 is disordered.

Belongs to the catalase family. Requires heme as cofactor.

Its pathway is alkaloid biosynthesis; ergot alkaloid biosynthesis. Its function is as follows. Catalase; part of the gene cluster that mediates the biosynthesis of fungal ergot alkaloid. DmaW catalyzes the first step of ergot alkaloid biosynthesis by condensing dimethylallyl diphosphate (DMAP) and tryptophan to form 4-dimethylallyl-L-tryptophan. The second step is catalyzed by the methyltransferase easF that methylates 4-dimethylallyl-L-tryptophan in the presence of S-adenosyl-L-methionine, resulting in the formation of 4-dimethylallyl-L-abrine. The catalase easC and the FAD-dependent oxidoreductase easE then transform 4-dimethylallyl-L-abrine to chanoclavine-I which is further oxidized by easD in the presence of NAD(+), resulting in the formation of chanoclavine-I aldehyde. Chanoclavine-I aldehyde is the precursor of ergoamides and ergopeptines in Clavicipitaceae, and clavine-type alcaloids such as fumiclavine in Trichocomaceae. However, the metabolites downstream of chanoclavine-I aldehyde in Arthrodermataceae have not been identified yet. This chain is Catalase easC, found in Trichophyton verrucosum (strain HKI 0517).